A 442-amino-acid chain; its full sequence is MQPPPSLCGRALVALVLACGLSRIWGEERGFPPDRATPLLQTAEIMTPPTKTLWPKGSNASLARSLAPAEVPKGDRTAGSPPRTISPPPCQGPIEIKETFKYINTVVSCLVFVLGIIGNSTLLRIIYKNKCMRNGPNILIASLALGDLLHIVIDIPINVYKLLAEDWPFGAEMCKLVPFIQKASVGITVLSLCALSIDRYRAVASWSRIKGIGVPKWTAVEIVLIWVVSVVLAVPEAIGFDIITMDYKGSYLRICLLHPVQKTAFMQFYKTAKDWWLFSFYFCLPLAITAFFYTLMTCEMLRKKSGMQIALNDHLKQRREVAKTVFCLVLVFALCWLPLHLSRILKLTLYNQNDPNRCELLSFLLVLDYIGINMASLNSCINPIALYLVSKRFKNCFKSCLCCWCQSFEEKQSLEEKQSCLKFKANDHGYDNFRSSNKYSSS.

Residues 1–26 (MQPPPSLCGRALVALVLACGLSRIWG) form the signal peptide. The Extracellular segment spans residues 27-101 (EERGFPPDRA…GPIEIKETFK (75 aa)). The N-linked (GlcNAc...) asparagine glycan is linked to Asn-59. Residues 69 to 88 (AEVPKGDRTAGSPPRTISPP) are disordered. The chain crosses the membrane as a helical span at residues 102–126 (YINTVVSCLVFVLGIIGNSTLLRII). Residues 127-137 (YKNKCMRNGPN) lie on the Cytoplasmic side of the membrane. The helical transmembrane segment at 138 to 163 (ILIASLALGDLLHIVIDIPINVYKLL) threads the bilayer. Residues 164-175 (AEDWPFGAEMCK) are Extracellular-facing. Residues Cys-174 and Cys-255 are joined by a disulfide bond. The chain crosses the membrane as a helical span at residues 176 to 197 (LVPFIQKASVGITVLSLCALSI). Topologically, residues 198-218 (DRYRAVASWSRIKGIGVPKWT) are cytoplasmic. The helical transmembrane segment at 219 to 243 (AVEIVLIWVVSVVLAVPEAIGFDII) threads the bilayer. The Extracellular portion of the chain corresponds to 244–271 (TMDYKGSYLRICLLHPVQKTAFMQFYKT). A helical transmembrane segment spans residues 272–296 (AKDWWLFSFYFCLPLAITAFFYTLM). Topologically, residues 297-324 (TCEMLRKKSGMQIALNDHLKQRREVAKT) are cytoplasmic. Position 305 is a phosphoserine (Ser-305). A helical transmembrane segment spans residues 325–350 (VFCLVLVFALCWLPLHLSRILKLTLY). The Extracellular segment spans residues 351–362 (NQNDPNRCELLS). Residues 363–389 (FLLVLDYIGINMASLNSCINPIALYLV) traverse the membrane as a helical segment. Topologically, residues 390 to 442 (SKRFKNCFKSCLCCWCQSFEEKQSLEEKQSCLKFKANDHGYDNFRSSNKYSSS) are cytoplasmic. 3 S-palmitoyl cysteine lipidation sites follow: Cys-402, Cys-403, and Cys-405. Ser-419 carries the post-translational modification Phosphoserine. Tyr-439 carries the phosphotyrosine modification. Residues Ser-440, Ser-441, and Ser-442 each carry the phosphoserine modification.

The protein belongs to the G-protein coupled receptor 1 family. Endothelin receptor subfamily. EDNRB sub-subfamily. In terms of processing, palmitoylation of Cys-402 was confirmed by the palmitoylation of Cys-402 in a deletion mutant lacking both Cys-403 and Cys-405. Expressed in placental stem villi vessels, but not in cultured placental villi smooth muscle cells.

It localises to the cell membrane. In terms of biological role, non-specific receptor for endothelin 1, 2, and 3. Mediates its action by association with G proteins that activate a phosphatidylinositol-calcium second messenger system. In Homo sapiens (Human), this protein is Endothelin receptor type B.